A 31-amino-acid chain; its full sequence is Cyclotide cter-J (31 aa).

Positions G1–D31 form a cross-link, cyclopeptide (Gly-Asp). Cystine bridges form between C5/C21, C9/C23, and C14/C28.

Post-translationally, contains 3 disulfide bonds. In terms of processing, this is a cyclic peptide.

Functionally, probably participates in a plant defense mechanism. The sequence is that of Cyclotide cter-J from Clitoria ternatea (Butterfly pea).